The sequence spans 367 residues: UDP-N-acetylglucosamine--N-acetylmuramyl-(pentapeptide) pyrophosphoryl-undecaprenol N-acetylglucosamine transferase (367 aa).

UDP-N-acetyl-alpha-D-glucosamine-binding positions include T15–G17, N127, R163, S191, I249, and Q294.

Belongs to the glycosyltransferase 28 family. MurG subfamily.

It is found in the cell inner membrane. It carries out the reaction di-trans,octa-cis-undecaprenyl diphospho-N-acetyl-alpha-D-muramoyl-L-alanyl-D-glutamyl-meso-2,6-diaminopimeloyl-D-alanyl-D-alanine + UDP-N-acetyl-alpha-D-glucosamine = di-trans,octa-cis-undecaprenyl diphospho-[N-acetyl-alpha-D-glucosaminyl-(1-&gt;4)]-N-acetyl-alpha-D-muramoyl-L-alanyl-D-glutamyl-meso-2,6-diaminopimeloyl-D-alanyl-D-alanine + UDP + H(+). It functions in the pathway cell wall biogenesis; peptidoglycan biosynthesis. Its function is as follows. Cell wall formation. Catalyzes the transfer of a GlcNAc subunit on undecaprenyl-pyrophosphoryl-MurNAc-pentapeptide (lipid intermediate I) to form undecaprenyl-pyrophosphoryl-MurNAc-(pentapeptide)GlcNAc (lipid intermediate II). The sequence is that of UDP-N-acetylglucosamine--N-acetylmuramyl-(pentapeptide) pyrophosphoryl-undecaprenol N-acetylglucosamine transferase from Burkholderia mallei (strain NCTC 10247).